A 297-amino-acid chain; its full sequence is N-acetylmuramic acid 6-phosphate etherase (297 aa).

In terms of domain architecture, SIS spans 55-218; the sequence is AAAALTRGGR…STGAMVKCGK (164 aa). The active-site Proton donor is the glutamate 83. The active site involves glutamate 114.

It belongs to the GCKR-like family. MurNAc-6-P etherase subfamily. As to quaternary structure, homodimer.

It carries out the reaction N-acetyl-D-muramate 6-phosphate + H2O = N-acetyl-D-glucosamine 6-phosphate + (R)-lactate. Its pathway is amino-sugar metabolism; 1,6-anhydro-N-acetylmuramate degradation. The protein operates within amino-sugar metabolism; N-acetylmuramate degradation. It participates in cell wall biogenesis; peptidoglycan recycling. Functionally, specifically catalyzes the cleavage of the D-lactyl ether substituent of MurNAc 6-phosphate, producing GlcNAc 6-phosphate and D-lactate. Together with AnmK, is also required for the utilization of anhydro-N-acetylmuramic acid (anhMurNAc) either imported from the medium or derived from its own cell wall murein, and thus plays a role in cell wall recycling. This is N-acetylmuramic acid 6-phosphate etherase from Cronobacter sakazakii (strain ATCC BAA-894) (Enterobacter sakazakii).